The sequence spans 331 residues: D-alanine--D-alanine ligase (331 aa).

The ATP-grasp domain maps to 122 to 328; the sequence is KLWYDAIGIP…FHEFLADCIE (207 aa). An ATP-binding site is contributed by 152-207; that stretch reads AFDKWGKLFVKAARQGSSVGCYSVTKIEQLSDAIDKAFGFSHQVLVEKAVKPRELE. Mg(2+) is bound by residues Asp282, Glu295, and Asn297.

It belongs to the D-alanine--D-alanine ligase family. Mg(2+) serves as cofactor. Requires Mn(2+) as cofactor.

The protein localises to the cytoplasm. It catalyses the reaction 2 D-alanine + ATP = D-alanyl-D-alanine + ADP + phosphate + H(+). The protein operates within cell wall biogenesis; peptidoglycan biosynthesis. In terms of biological role, cell wall formation. The sequence is that of D-alanine--D-alanine ligase from Vibrio vulnificus (strain CMCP6).